The chain runs to 231 residues: Large ribosomal subunit protein uL1 (231 aa).

It belongs to the universal ribosomal protein uL1 family. As to quaternary structure, part of the 50S ribosomal subunit.

In terms of biological role, binds directly to 23S rRNA. The L1 stalk is quite mobile in the ribosome, and is involved in E site tRNA release. Functionally, protein L1 is also a translational repressor protein, it controls the translation of the L11 operon by binding to its mRNA. This is Large ribosomal subunit protein uL1 from Pseudomonas entomophila (strain L48).